We begin with the raw amino-acid sequence, 208 residues long: Thiamine-phosphate synthase (208 aa).

4-amino-2-methyl-5-(diphosphooxymethyl)pyrimidine contacts are provided by residues 38–42 and N70; that span reads QYRSK. The Mg(2+) site is built by D71 and D90. Residue T109 participates in 4-amino-2-methyl-5-(diphosphooxymethyl)pyrimidine binding. 136–138 contacts 2-[(2R,5Z)-2-carboxy-4-methylthiazol-5(2H)-ylidene]ethyl phosphate; sequence SAT. K139 is a binding site for 4-amino-2-methyl-5-(diphosphooxymethyl)pyrimidine. 2-[(2R,5Z)-2-carboxy-4-methylthiazol-5(2H)-ylidene]ethyl phosphate-binding positions include G166 and 186–187; that span reads VS.

This sequence belongs to the thiamine-phosphate synthase family. Mg(2+) serves as cofactor.

The catalysed reaction is 2-[(2R,5Z)-2-carboxy-4-methylthiazol-5(2H)-ylidene]ethyl phosphate + 4-amino-2-methyl-5-(diphosphooxymethyl)pyrimidine + 2 H(+) = thiamine phosphate + CO2 + diphosphate. It carries out the reaction 2-(2-carboxy-4-methylthiazol-5-yl)ethyl phosphate + 4-amino-2-methyl-5-(diphosphooxymethyl)pyrimidine + 2 H(+) = thiamine phosphate + CO2 + diphosphate. It catalyses the reaction 4-methyl-5-(2-phosphooxyethyl)-thiazole + 4-amino-2-methyl-5-(diphosphooxymethyl)pyrimidine + H(+) = thiamine phosphate + diphosphate. The protein operates within cofactor biosynthesis; thiamine diphosphate biosynthesis; thiamine phosphate from 4-amino-2-methyl-5-diphosphomethylpyrimidine and 4-methyl-5-(2-phosphoethyl)-thiazole: step 1/1. Functionally, condenses 4-methyl-5-(beta-hydroxyethyl)thiazole monophosphate (THZ-P) and 2-methyl-4-amino-5-hydroxymethyl pyrimidine pyrophosphate (HMP-PP) to form thiamine monophosphate (TMP). This Aromatoleum aromaticum (strain DSM 19018 / LMG 30748 / EbN1) (Azoarcus sp. (strain EbN1)) protein is Thiamine-phosphate synthase.